The following is a 304-amino-acid chain: Coenzyme PQQ synthesis protein B (304 aa).

The protein belongs to the PqqB family.

It participates in cofactor biosynthesis; pyrroloquinoline quinone biosynthesis. Its function is as follows. May be involved in the transport of PQQ or its precursor to the periplasm. The polypeptide is Coenzyme PQQ synthesis protein B (Gluconobacter oxydans (strain 621H) (Gluconobacter suboxydans)).